We begin with the raw amino-acid sequence, 791 residues long: MASSTKVSLRRPPRPQVMYSLKPKVVEFDKVWVQLRPSIIDIINLRPITNVQWHHKFSDVYDICVSIPTPLSERLYNEVKACIQEHVRQKRQDIVDVDPDLLLQEYHKMWRVFHEGAIFIHRLFGYLNKQFVKQKRCTDLDNFAQYAAFLQIPDVKEIGCLALEIWKEDLVKTILPQLVKLLLIAIDNDRKGNFPHIANEVSGVINSFVKMEETDFDVVPAEGARYKARESTTAFYQESFEKPLLTDTEQYYSALAQKMLTDLSCSEYMEQVIVLLEQEEMRAKKYLHESSVEKVITLCQKVMIKAHKDKLHAVCHDLITNEENKDLRNMYRLLKPIQAGLSVMVKEFEEYVKKKGLEAVSRLTGENVPQQFVENVLRVYNKFNDMKTAVFMDDGEFSSGLDKALQGVVNSKEPGQSVPKASERLARYTDGLLKKSTKGLSETDLEAKLDSAIVIFRYIEDKDIFQKFYSKMLANRLIASTSISMDAEELMINKLKQACGYEFTSKLSRMFTDIGLSQELSNNFDKHIADIKTVQPDVKFVPTQTMILQAGSWPLNAPQLSTNSNNQTAQDVANFHLPRILQPVIQEFEKFYTGKHNGRKLTWLFNMSQGDVRLTYLDKQYVAQMYVYQMAALLCFERRDAILVKDIGEEIGVSGDYLLKTIRTILDVTLLTCDDQNLTADSLVRLNMSMTSKRMKFRLQAPQVNKAVEKEQEAVANTVSQDRKYYMECAIVRIMKTRKVLKHNALVTEIMDQTKGRFSPDVPFIKKSIEDLIEKMYIQRTDQNDEYQYLA.

The region spanning 722-784 is the Cullin neddylation domain; sequence DRKYYMECAI…KMYIQRTDQN (63 aa). Residue K736 forms a Glycyl lysine isopeptide (Lys-Gly) (interchain with G-Cter in NEDD8) linkage.

This sequence belongs to the cullin family. Component of multiple CBC (Cul2-ElonginB-ElonginC) E3 ubiquitin-protein ligase complexes formed of cul-2, elb-1, elc-1, rbx-1 and a variable substrate recognition component. Component of the CBC(fem-1) E3 ubiquitin-protein ligase complex with fem-1, fem-2 and fem-3. The CBC(fem-1) complex interacts with tra-1 and promotes tra-1 degradation. Probable component of the CBC(lrr-1) E3 ubiquitin-protein ligase complex incuding cul-2, elb-1, elc-1, rbx-1 and lrr-1. The CBC(lrr-1) complex interacts with the DNA replisome complex at the end of S phase; the interaction promotes the release of components of the CMG helicase complex (a component of the replisome) from chromatin. Probable component of an CBC(zif-1) E3 ubiquitin-protein ligase including cul-2, elc-1, rbx-1 and zif-1. Part of an E3 ubiquitin-protein ligase complex including cul-2, elc-1 and zyg-11. Interacts with Skp1-related protein skr-10. Post-translationally, neddylated; which enhances the ubiquitination activity of CBC (Cul2-ElonginB-ElonginC) E3 ubiquitin-protein ligase complexes. In terms of tissue distribution, in adults, highly expressed in meiotic cells and oocytes. In larvae, expressed in many proliferating cell types: P cells during the L1 stage; seam cells when they divide at every molt; vulval and somatic gonad cells in late L3 and L4 stages; and intestinal cells throughout larval development.

The protein localises to the cytoplasm. The protein resides in the nucleus. The protein operates within protein modification; protein ubiquitination. Functionally, core component of multiple cullin-RING-based CBC (Cul2-ElonginB-ElonginC) E3 ubiquitin-protein ligase complexes which mediate the ubiquitination and subsequent proteasomal degradation of target proteins. As a scaffold protein may contribute to catalysis through positioning of the substrate and the ubiquitin-conjugating enzyme. The functional specificity of the CBC complex depends on the variable substrate recognition component. May function in ubiquitin-mediated degradation of CKIs to target cki-1 for degradation. CBC(zif-1) may ensure germline precursor cell asymmetry by targeting germline proteins for destruction if expressed in non-germline cells. As part of the CBC(fem-1) complex directs ubiquitination of tra-1. As part of the CBC(lrr-1) complex, required for the ubiquitination and dissasembly of the CMG helicase complex from chromatin at the end of DNA replication. Positive cell-cycle regulator that is required at two distinct points in the cell cycle; the G1-to-S-phase transition and mitosis. Also required for proper cytoskeletal movement and mitotic chromosome condensation. This is Cullin-2 from Caenorhabditis elegans.